A 156-amino-acid polypeptide reads, in one-letter code: Small ribosomal subunit protein uS7 (156 aa).

It belongs to the universal ribosomal protein uS7 family. As to quaternary structure, part of the 30S ribosomal subunit. Contacts proteins S9 and S11.

Functionally, one of the primary rRNA binding proteins, it binds directly to 16S rRNA where it nucleates assembly of the head domain of the 30S subunit. Is located at the subunit interface close to the decoding center, probably blocks exit of the E-site tRNA. This is Small ribosomal subunit protein uS7 from Prochlorococcus marinus (strain NATL2A).